We begin with the raw amino-acid sequence, 110 residues long: MRHYKTLRYYETVFAVKPTLSEEEMKKKFEQVKEFIKQKGGEILYEEDWGMRQLAYPIQKFNNARYFLVQFKTENPQLPNELDFQLKIDEDVIRWLNFQIKESEVKKNAQ.

Belongs to the bacterial ribosomal protein bS6 family.

Functionally, binds together with bS18 to 16S ribosomal RNA. The sequence is that of Small ribosomal subunit protein bS6 (rpsF) from Aquifex aeolicus (strain VF5).